A 61-amino-acid polypeptide reads, in one-letter code: Beta-insect depressant toxin BotIT5 (61 aa).

In terms of domain architecture, LCN-type CS-alpha/beta spans 1 to 61 (DGYIRKRDGC…TWKSETNTCG (61 aa)). 4 cysteine pairs are disulfide-bonded: cysteine 10–cysteine 60, cysteine 14–cysteine 35, cysteine 21–cysteine 42, and cysteine 25–cysteine 44. Glycine amide is present on glycine 61.

It belongs to the long (4 C-C) scorpion toxin superfamily. Sodium channel inhibitor family. Beta subfamily. Expressed by the venom gland.

It is found in the secreted. Functionally, depressant insect beta-toxins cause a transient contraction paralysis followed by a slow flaccid paralysis. They bind voltage-independently at site-4 of sodium channels (Nav) and shift the voltage of activation toward more negative potentials thereby affecting sodium channel activation and promoting spontaneous and repetitive firing. This toxin is active only on insects. This chain is Beta-insect depressant toxin BotIT5, found in Buthus occitanus tunetanus (Common European scorpion).